The chain runs to 281 residues: Bifunctional N-acyl-homoserine lactone acylase/prephenate dehydratase (281 aa).

The region spanning 6–181 (IIAFQGRPGA…NTTRFYIASR (176 aa)) is the Prephenate dehydratase domain. One can recognise an ACT domain in the interval 196 to 273 (TLLFRVNNQP…EQQEILGVYP (78 aa)). Ala-207, Leu-208, Asn-221, and Met-222 together coordinate L-phenylalanine.

In terms of assembly, homodimer.

It carries out the reaction an N-acyl-L-homoserine lactone + H2O = L-homoserine lactone + a carboxylate. The catalysed reaction is prephenate + H(+) = 3-phenylpyruvate + CO2 + H2O. The protein operates within amino-acid biosynthesis; L-phenylalanine biosynthesis; phenylpyruvate from prephenate: step 1/1. Multifunctional enzyme that acts on N-acyl-homoserine lactones (AHLs), beta-lactam antibiotics and shows prephenate dehydratase activity. Acts as an acylase on AHL and hydrolyzes the amide bond of the acyl side-chain of AHL molecules, releasing homoserine lactone (HSL) and the fatty acid. Can use different 3-oxo-acyl homoserine lactones, such as 3-oxo-decanoyl homoserine lactone, which is the preferred substrate, 3-oxo-octanoyl homoserine lactone, 3-oxo-hexanoyl homoserine lactone and 3-oxo-dodecanoyl homoserine lactone. It can also degrade various beta-lactam antibiotics, including penicillin G, amoxicillin and ampicillin, but not cefotaxime. In addition, it can complement a phenylalanine auxotrophic E.coli mutant, which carries a kanamycin gene inserted into pheA, suggesting that GqqA can also function as a prephenate dehydratase. Involved in bacterial quorum quenching (QQ) and cellulose biofilm formation. In Komagataeibacter europaeus (Gluconacetobacter europaeus), this protein is Bifunctional N-acyl-homoserine lactone acylase/prephenate dehydratase.